Reading from the N-terminus, the 429-residue chain is 26S proteasome regulatory subunit 6A homolog (429 aa).

The interval 1–21 (MSSPPPAAAAAMAVDDADDDQ) is disordered. 217–224 (GPPGTGKT) is an ATP binding site.

It belongs to the AAA ATPase family.

Its subcellular location is the cytoplasm. The protein resides in the nucleus. The 26S proteasome is involved in the ATP-dependent degradation of ubiquitinated proteins. The regulatory (or ATPase) complex confers ATP dependency and substrate specificity to the 26S complex. In Oryza sativa subsp. japonica (Rice), this protein is 26S proteasome regulatory subunit 6A homolog (TBP1).